An 841-amino-acid chain; its full sequence is Axin-1 (841 aa).

The segment at 1 to 78 (MNIQGKGFPL…GYEPEGSASP (78 aa)) is disordered. Residues 44–61 (FYSSKSDAVRNETSTATP) show a composition bias toward polar residues. The region spanning 88–211 (SLHSLLDDQD…LKSDIYLEYT (124 aa)) is the RGS domain. Positions 217-269 (SPKIYSDPSSGSGTGKGLPGYLPTLNEDEEWKCDQDTEPEASRDSAPSSRLTQ) are disordered. Residues 248–259 (KCDQDTEPEASR) show a composition bias toward basic and acidic residues. The interaction with GSK3B stretch occupies residues 348 to 433 (LRKQHRREMQ…DADISSGPSV (86 aa)). The interval 434-508 (ISHKMPSAQP…RSPESGHLGK (75 aa)) is interaction with beta-catenin. Disordered regions lie at residues 482-527 (KTPG…TTKS), 613-635 (NIKK…SPED), and 727-756 (RRLE…SGAS). Positions 727–736 (RRLEEEEKRA) are enriched in basic and acidic residues. The DIX domain occupies 759–841 (CENIVVAYYF…KIIGKVEKID (83 aa)).

As to quaternary structure, homodimer. ADP-ribosylated by tankyrase TNKS and TNKS2. Poly-ADP-ribosylated protein is recognized by RNF146, followed by ubiquitination at 'Lys-48' and subsequent activation of the Wnt signaling pathway. Post-translationally, ubiquitinated by RNF146 when poly-ADP-ribosylated, leading to its degradation and subsequent activation of the Wnt signaling pathway.

Its subcellular location is the cytoplasm. The protein localises to the nucleus. The protein resides in the membrane. It localises to the cell membrane. Functionally, component of the beta-catenin destruction complex required for regulating CTNNB1 levels through phosphorylation and ubiquitination, and modulating Wnt-signaling. Controls dorsoventral patterning via two opposing effects; down-regulates CTNNB1 to inhibit the Wnt signaling pathway and ventralize embryos, but also dorsalizes embryos by activating a Wnt-independent JNK signaling pathway. This chain is Axin-1 (AXIN1), found in Gallus gallus (Chicken).